The chain runs to 75 residues: Dermaseptin-SP5 (75 aa).

A signal peptide spans 1 to 22 (MAFLKKSLFLVLFLGLVSLSMC). Residues 23-45 (EEEKRENEVEEEQEDDEQSELRR) constitute a propeptide that is removed on maturation. The interval 26 to 46 (KRENEVEEEQEDDEQSELRRS) is disordered. Positions 30 to 40 (EVEEEQEDDEQ) are enriched in acidic residues. Proline 72 carries the proline amide modification. Residues 74–75 (EQ) constitute a propeptide that is removed on maturation.

It belongs to the frog skin active peptide (FSAP) family. Dermaseptin subfamily. In terms of tissue distribution, expressed by the skin glands.

It is found in the secreted. It localises to the target cell membrane. Antimicrobial peptide with weak activity against Gram-positive and Gram-negative bacteria and fungi. Has been tested against E.coli (MIC=96.06-256 uM), S.aureus (MIC&gt;192.12 uM), K.pneumoniae (MIC&gt;189.00 uM) and C.albicans (MIC=384.24-1024 uM). Probably acts by disturbing membrane functions with its alpha-helical amphipathic structure. May penetrate bacterial membranes, but stay at the mammalian membrane surface. Does not show hemolytic activity. Does not interact at all with cardiolipin. This chain is Dermaseptin-SP5, found in Agalychnis spurrelli (Gliding leaf frog).